Consider the following 748-residue polypeptide: Catalase-peroxidase (748 aa).

Residues 92–238 (WHSAGTYRIG…LAAVQMGLIY (147 aa)) constitute a cross-link (tryptophyl-tyrosyl-methioninium (Trp-Tyr) (with M-264)). Residue histidine 93 is the Proton acceptor of the active site. The segment at residues 238–264 (YVNPEGPDGNPDPIASARDIRDTFARM) is a cross-link (tryptophyl-tyrosyl-methioninium (Tyr-Met) (with W-92)). Histidine 279 is a binding site for heme b.

The protein belongs to the peroxidase family. Peroxidase/catalase subfamily. Homodimer or homotetramer. Heme b is required as a cofactor. Post-translationally, formation of the three residue Trp-Tyr-Met cross-link is important for the catalase, but not the peroxidase activity of the enzyme.

The enzyme catalyses H2O2 + AH2 = A + 2 H2O. It carries out the reaction 2 H2O2 = O2 + 2 H2O. Bifunctional enzyme with both catalase and broad-spectrum peroxidase activity. The chain is Catalase-peroxidase from Xanthomonas axonopodis pv. citri (strain 306).